Reading from the N-terminus, the 277-residue chain is Transcription antiterminator LicT (277 aa).

PRD domains lie at 65-170 (DIPI…EEMP) and 171-277 (NIIN…VKQA).

Belongs to the transcriptional antiterminator BglG family. Phosphorylated.

Its function is as follows. Mediates positive regulation of the glucanase operon (licST) by functioning as an antiterminator factor of transcription. Prevents termination at terminator lic-t. The chain is Transcription antiterminator LicT (licT) from Bacillus subtilis (strain 168).